We begin with the raw amino-acid sequence, 345 residues long: Probable deoxyhypusine synthase 2 (345 aa).

Catalysis depends on lysine 292, which acts as the Nucleophile.

The protein belongs to the deoxyhypusine synthase family. NAD(+) serves as cofactor.

The catalysed reaction is [eIF5A protein]-L-lysine + spermidine = [eIF5A protein]-deoxyhypusine + propane-1,3-diamine. The protein operates within protein modification; eIF5A hypusination. Catalyzes the NAD-dependent oxidative cleavage of spermidine and the subsequent transfer of the butylamine moiety of spermidine to the epsilon-amino group of a specific lysine residue of the eIF-5A precursor protein to form the intermediate deoxyhypusine residue. The sequence is that of Probable deoxyhypusine synthase 2 (dys2) from Methanosarcina mazei (strain ATCC BAA-159 / DSM 3647 / Goe1 / Go1 / JCM 11833 / OCM 88) (Methanosarcina frisia).